Here is a 150-residue protein sequence, read N- to C-terminus: Protein-export protein SecB (150 aa).

It belongs to the SecB family. In terms of assembly, homotetramer, a dimer of dimers. One homotetramer interacts with 1 SecA dimer.

It localises to the cytoplasm. In terms of biological role, one of the proteins required for the normal export of preproteins out of the cell cytoplasm. It is a molecular chaperone that binds to a subset of precursor proteins, maintaining them in a translocation-competent state. It also specifically binds to its receptor SecA. The chain is Protein-export protein SecB from Polaromonas sp. (strain JS666 / ATCC BAA-500).